Here is a 184-residue protein sequence, read N- to C-terminus: MSWRSEDIWIELLTGSRKLSNFCWALILFLGSLGFLLVGTSSYLGRNWISFVPSQQFIFFPQGIVMSFYGIAGLFISSYLWCTISWNIGSGYDRFDRKEGIVCIFRWGFPGKNRRIFLRFLIKDIQSVRIEVKEGLYARHVLYMDIRGQGAIPLTRTDENLTPREIEQKAAELAYFLRVPIEVF.

A run of 2 helical transmembrane segments spans residues 19-39 (LSNFCWALILFLGSLGFLLVG) and 57-77 (FIFFPQGIVMSFYGIAGLFIS).

The protein belongs to the Ycf4 family.

It localises to the plastid. The protein resides in the chloroplast thylakoid membrane. Seems to be required for the assembly of the photosystem I complex. This is Photosystem I assembly protein Ycf4 from Jasminum nudiflorum (Winter jasmine).